Reading from the N-terminus, the 237-residue chain is Myelin protein zero-like protein 3 (237 aa).

An N-terminal signal peptide occupies residues 1-32 (MQLARGTVGGRGCALFPLLSILVVQGARIVLS). Residues 33-149 (LEISADAHVR…NIPLTELTVT (117 aa)) enclose the Ig-like V-type domain. The Extracellular portion of the chain corresponds to 33–159 (LEISADAHVR…ERGFGTMLSS (127 aa)). An intrachain disulfide couples cysteine 53 to cysteine 129. An N-linked (GlcNAc...) asparagine glycan is attached at asparagine 124. Residues 160-180 (VALLSILVFVPSAVVVILLLV) traverse the membrane as a helical segment. At 181–237 (RMGRKATGVQKRSRSGYKKSSIEVSDDTDQEDSNDCMTRLCVRCAECLDSDYEEEAY) the chain is on the cytoplasmic side.

It belongs to the myelin P0 protein family. Present in all tissues tested, including the skin. Present in the keratinocytes and sebocytes in the skin (at protein level).

It is found in the membrane. Its function is as follows. Mediates homophilic cell-cell adhesion. In Mus musculus (Mouse), this protein is Myelin protein zero-like protein 3 (Mpzl3).